The following is a 250-amino-acid chain: Orotidine 5'-phosphate decarboxylase (250 aa).

Substrate contacts are provided by residues aspartate 9, lysine 40, 67 to 76 (DLKFHDIPNT), threonine 132, arginine 190, glutamine 204, glycine 224, and arginine 225. The active-site Proton donor is lysine 69.

This sequence belongs to the OMP decarboxylase family. Type 1 subfamily. As to quaternary structure, homodimer.

It carries out the reaction orotidine 5'-phosphate + H(+) = UMP + CO2. It functions in the pathway pyrimidine metabolism; UMP biosynthesis via de novo pathway; UMP from orotate: step 2/2. Catalyzes the decarboxylation of orotidine 5'-monophosphate (OMP) to uridine 5'-monophosphate (UMP). This is Orotidine 5'-phosphate decarboxylase from Nitratidesulfovibrio vulgaris (strain DSM 19637 / Miyazaki F) (Desulfovibrio vulgaris).